A 362-amino-acid polypeptide reads, in one-letter code: Lactosylceramide alpha-2,3-sialyltransferase (362 aa).

Residues 1–5 (MRRPS) are Cytoplasmic-facing. Residues 6 to 26 (LLLKDILKCTLLVFGVWILYI) form a helical; Signal-anchor for type II membrane protein membrane-spanning segment. Over 27 to 362 (LKLNYTTEEC…DLSGGIDREF (336 aa)) the chain is Lumenal. Residues Asn30, Asn180, Asn224, and Asn334 are each glycosylated (N-linked (GlcNAc...) asparagine). A disulfide bond links Cys139 and Cys297.

It belongs to the glycosyltransferase 29 family.

The protein localises to the golgi apparatus membrane. The enzyme catalyses a beta-D-Gal-(1-&gt;4)-beta-D-Glc-(1&lt;-&gt;1)-Cer(d18:1(4E)) + CMP-N-acetyl-beta-neuraminate = a ganglioside GM3 (d18:1(4E)) + CMP + H(+). The catalysed reaction is ganglioside GA2 (d18:1(4E)/18:0) + CMP-N-acetyl-beta-neuraminate = ganglioside GM2 (d18:1(4E)/18:0) + CMP + H(+). It catalyses the reaction a beta-D-Gal-(1&lt;-&gt;1')-ceramide + CMP-N-acetyl-beta-neuraminate = N-acetyl-alpha-neuraminosyl-(2-&gt;3)-beta-D-galactosyl-(1&lt;-&gt;1')-ceramide + CMP + H(+). It carries out the reaction ganglioside GA1 (d18:1(4E)/18:0) + CMP-N-acetyl-beta-neuraminate = ganglioside GM1 (d18:1(4E)/18:0) + CMP + H(+). Functionally, transfers the sialyl group (N-acetyl-alpha-neuraminyl or NeuAc) from CMP-NeuAc to the non-reducing terminal galactose (Gal) of glycosphingolipids forming gangliosides (important molecules involved in the regulation of multiple cellular processes, including cell proliferation and differentiation, apoptosis, embryogenesis, development, and oncogenesis). Mainly involved in the biosynthesis of ganglioside GM3 but can also use different glycolipids as substrate acceptors such as D-galactosylceramide (GalCer), asialo-GM2 (GA2) and asialo-GM1 (GA1), although less preferentially than beta-D-Gal-(1-&gt;4)-beta-D-Glc-(1&lt;-&gt;1)-Cer (LacCer). The sequence is that of Lactosylceramide alpha-2,3-sialyltransferase (ST3GAL5) from Pan troglodytes (Chimpanzee).